The sequence spans 292 residues: Nanos homolog 1 (292 aa).

2 disordered regions span residues 1 to 41 (MEAF…QPFS) and 68 to 121 (GGNG…SRGR). The interval 40–56 (FSSWNDYLGLATLITKA) is essential for its translational repressor activity. A compositionally biased stretch (low complexity) spans 76–87 (PPSSSSSSCCSP). The span at 104–115 (DYDEDDDDDSDE) shows a compositional bias: acidic residues. The segment at 213-267 (VCVFCRNNKEAMALYTTHILKGPDGRVLCPVLRRYTCPLCGASGDNAHTIKYCPL) adopts a Nanos-type zinc-finger fold. Residues Cys214, Cys217, His230, Cys241, Cys249, Cys252, His260, and Cys265 each coordinate Zn(2+). Short sequence motifs (C2HC) lie at residues 214–241 (CVFCRNNKEAMALYTTHILKGPDGRVLC) and 249–265 (CPLCGASGDNAHTIKYC). The disordered stretch occupies residues 268-292 (SKVPPPPARPPPRSARDGPPGKKLR). Pro residues predominate over residues 269-280 (KVPPPPARPPPR). Residues 281–292 (SARDGPPGKKLR) are compositionally biased toward basic and acidic residues.

This sequence belongs to the nanos family. Interacts with PUM2, SNAPIN and CTNNB1. Interacts (via N-terminal region) with CTNND1. Interacts with DDX20 (via N-terminal region). Testis and ovary (at protein level). Predominantly expressed in testis. Specifically expressed during germline development. In adult tissues, it is mainly expressed in spermatogonia, the stem cells of the germline. Also expressed during meiosis in spermatocytes. Not present in late, post-meiotic stage germ cells. Expressed in fetal ovaries, while it is weakly or not expressed in mature postmeiotic oocytes, suggesting that it may be expressed in premeiotic female germ cells. Expressed at high levels only in the E-cadherin deficient cell lines. Highly expressed in lung carcinomas and mostly detected in invasive tumor cells and its expression correlates with tumor aggressiveness.

The protein localises to the cytoplasm. The protein resides in the perinuclear region. May act as a translational repressor which regulates translation of specific mRNAs by forming a complex with PUM2 that associates with the 3'-UTR of mRNA targets. Capable of interfering with the proadhesive and anti-invasive functions of E-cadherin. Up-regulates the production of MMP14 to promote tumor cell invasion. The protein is Nanos homolog 1 (NANOS1) of Homo sapiens (Human).